The following is a 186-amino-acid chain: MSIVEVKQNAEQKMQQSVDSFKNSLTKIRTGRANPGLLDTVHVDYYGSMVPISQVANVSLLDARTISVSPWEKGMGAKIEKAIRDSDLGLNPAAQGDLIRVPMPAMTEERRKELTKVVRAEGEHAKVAVRNLRRDANEGVKKLLKEKLVSEDDERRAQDEIQKFTDRFIAEVDKLVAGKEQDIMAV.

This sequence belongs to the RRF family.

It localises to the cytoplasm. Responsible for the release of ribosomes from messenger RNA at the termination of protein biosynthesis. May increase the efficiency of translation by recycling ribosomes from one round of translation to another. The chain is Ribosome-recycling factor from Polaromonas sp. (strain JS666 / ATCC BAA-500).